A 286-amino-acid polypeptide reads, in one-letter code: Bark leucoagglutinin (286 aa).

The N-terminal stretch at 1–28 is a signal peptide; sequence ATSNSKPTQVLLATFLTFFFLLLNNVNS. N-acetyl-alpha-neuraminyl-(2-&gt;3)-beta-D-galactosyl-(1-&gt;4)-beta-D-glucose is bound at residue Tyr-73. Asn-89 carries an N-linked (GlcNAc...) asparagine glycan. Asp-115 and Lys-135 together coordinate N-acetyl-alpha-neuraminyl-(2-&gt;3)-beta-D-galactosyl-(1-&gt;4)-beta-D-glucose. N-linked (GlcNAc...) asparagine glycosylation occurs at Asn-141. Mn(2+) contacts are provided by Glu-155 and Asp-157. Asp-157, Tyr-159, Asp-165, and Asp-168 together coordinate Ca(2+). Residues Tyr-159 and Asp-165 each coordinate N-acetyl-alpha-neuraminyl-(2-&gt;3)-beta-D-galactosyl-(1-&gt;4)-beta-D-glucose. Mn(2+) is bound by residues Asp-168 and His-173. Asn-207 and Asn-219 each carry an N-linked (GlcNAc...) asparagine glycan. Positions 278–286 are cleaved as a propeptide — removed in mature form; the sequence is NVHIARYTA.

Belongs to the leguminous lectin family.

Functionally, sialic acid-binding lectin specifically recognizing the trisaccharide sequence Neu5Ac/Gc-alpha-2,3-Gal-beta-1,4-GlcNAc/Glc. The sequence is that of Bark leucoagglutinin from Maackia amurensis (Amur maackia).